The chain runs to 333 residues: CRISPR-associated endonuclease Cas1 (333 aa).

Mn(2+) contacts are provided by Glu-162, His-226, and Glu-241.

Belongs to the CRISPR-associated endonuclease Cas1 family. Homodimer, forms a heterotetramer with a Cas2 homodimer. Mg(2+) serves as cofactor. It depends on Mn(2+) as a cofactor.

In terms of biological role, CRISPR (clustered regularly interspaced short palindromic repeat), is an adaptive immune system that provides protection against mobile genetic elements (viruses, transposable elements and conjugative plasmids). CRISPR clusters contain spacers, sequences complementary to antecedent mobile elements, and target invading nucleic acids. CRISPR clusters are transcribed and processed into CRISPR RNA (crRNA). Acts as a dsDNA endonuclease. Involved in the integration of spacer DNA into the CRISPR cassette. This chain is CRISPR-associated endonuclease Cas1, found in Nanoarchaeum equitans (strain Kin4-M).